Reading from the N-terminus, the 283-residue chain is Nickel/cobalt efflux system RcnA (283 aa).

Topologically, residues 1–12 (MTEFTTLLQQGN) are periplasmic. Residues 13 to 33 (AWFFIPSAILLGALHGLEPGH) traverse the membrane as a helical segment. The Cytoplasmic segment spans residues 34 to 56 (SKTMMAAFIIAIKGTIKQAVMLG). A helical transmembrane segment spans residues 57–77 (LAATISHTAVVWLIAFGGMVI). Topologically, residues 78 to 86 (SKRFTAQSA) are periplasmic. Residues 87–107 (EPWLQLISAVIIISTAFWMFW) traverse the membrane as a helical segment. Residues 108 to 184 (RTWRGERNWL…DGREVTNWQI (77 aa)) lie on the Cytoplasmic side of the membrane. Residues 127-162 (DHEHHQDHDHDHDHDHDHEHHHHHEHGDNEEYQDAH) are disordered. Composition is skewed to basic and acidic residues over residues 129–144 (EHHQ…DHDH) and 151–162 (EHGDNEEYQDAH). Residues 185 to 205 (LLFGLTGGLIPCPAAITVLLI) traverse the membrane as a helical segment. The Periplasmic portion of the chain corresponds to 206 to 218 (CIQLKALTLGATL). The chain crosses the membrane as a helical span at residues 219–239 (VVSFSIGLALTLVTVGVGAAI). Over 240-260 (SVQQVAKRWSGFNTLAKRAPY) the chain is Cytoplasmic. A helical transmembrane segment spans residues 261 to 281 (FSSLLIGLVGVYMGVHGFMGI). Topologically, residues 282-283 (MR) are periplasmic.

It belongs to the NiCoT transporter (TC 2.A.52) family. RcnA subfamily.

It is found in the cell inner membrane. In terms of biological role, efflux system for nickel and cobalt. The protein is Nickel/cobalt efflux system RcnA (rcnA) of Escherichia coli O157:H7.